Here is an 84-residue protein sequence, read N- to C-terminus: Putative membrane protein insertion efficiency factor (84 aa).

This sequence belongs to the UPF0161 family.

It is found in the cell inner membrane. Its function is as follows. Could be involved in insertion of integral membrane proteins into the membrane. This chain is Putative membrane protein insertion efficiency factor, found in Shewanella frigidimarina (strain NCIMB 400).